The chain runs to 131 residues: Profilin (131 aa).

The protein belongs to the profilin family. As to quaternary structure, occurs in many kinds of cells as a complex with monomeric actin in a 1:1 ratio.

It localises to the cytoplasm. Its subcellular location is the cytoskeleton. Its function is as follows. Binds to actin and affects the structure of the cytoskeleton. At high concentrations, profilin prevents the polymerization of actin, whereas it enhances it at low concentrations. By binding to PIP2, it inhibits the formation of IP3 and DG. In Capsicum annuum (Capsicum pepper), this protein is Profilin.